The chain runs to 200 residues: Glutathione S-transferase 1-1 (200 aa).

In terms of domain architecture, GST N-terminal spans 1–73 (GSSPCRSVIM…YLVEKYGKTD (73 aa)). Glutathione contacts are provided by residues S2, 43 to 45 (HTI), and 57 to 59 (ESR). Positions 79 to 200 (CPKKRAVINQ…AGCLEFKKYF (122 aa)) constitute a GST C-terminal domain.

It belongs to the GST superfamily. Theta family. As to quaternary structure, homodimer.

The enzyme catalyses RX + glutathione = an S-substituted glutathione + a halide anion + H(+). It catalyses the reaction 1,1,1-trichloro-2,2-bis(4-chlorophenyl)ethane = 1,1-dichloro-2,2-bis(4-chlorophenyl)ethylene + chloride + H(+). Functionally, conjugation of reduced glutathione to a wide number of exogenous and endogenous hydrophobic electrophiles. Has DDT dehydrochlorinase activity. The chain is Glutathione S-transferase 1-1 (GstD1) from Drosophila teissieri (Fruit fly).